The chain runs to 247 residues: uncharacterized protein (247 aa).

This is an uncharacterized protein from Archaeoglobus fulgidus (strain ATCC 49558 / DSM 4304 / JCM 9628 / NBRC 100126 / VC-16).